A 212-amino-acid chain; its full sequence is Uridine kinase (212 aa).

An ATP-binding site is contributed by 13–20 (GASASGKS).

The protein belongs to the uridine kinase family.

It localises to the cytoplasm. It catalyses the reaction uridine + ATP = UMP + ADP + H(+). It carries out the reaction cytidine + ATP = CMP + ADP + H(+). The protein operates within pyrimidine metabolism; CTP biosynthesis via salvage pathway; CTP from cytidine: step 1/3. Its pathway is pyrimidine metabolism; UMP biosynthesis via salvage pathway; UMP from uridine: step 1/1. This chain is Uridine kinase, found in Shewanella putrefaciens (strain CN-32 / ATCC BAA-453).